Here is a 527-residue protein sequence, read N- to C-terminus: Aspartokinase (527 aa).

The residue at position 333 (threonine 333) is a Phosphothreonine. The ACT domain maps to 442–527 (LVGKHMKQYI…RLEQLKRLGI (86 aa)).

This sequence belongs to the aspartokinase family. Homohexamer. Interacts with FPR1; the interaction is direct, plays a role in feedback inhibition of aspartokinase by threonine, and inhibited by tacrolimus and sirolimus.

The catalysed reaction is L-aspartate + ATP = 4-phospho-L-aspartate + ADP. It functions in the pathway amino-acid biosynthesis; L-methionine biosynthesis via de novo pathway; L-homoserine from L-aspartate: step 1/3. It participates in amino-acid biosynthesis; L-threonine biosynthesis; L-threonine from L-aspartate: step 1/5. Allosterically inhibited by threonine. Its function is as follows. Phosphorylates aspartate, the first step in the biosynthesis of amino acids that derive from aspartate (the aspartate family of amino acids), including methioinine and threonine, the latter of which is a precursor to isoleucine. This chain is Aspartokinase (HOM3), found in Saccharomyces cerevisiae (strain ATCC 204508 / S288c) (Baker's yeast).